The primary structure comprises 514 residues: CENP-B homolog protein 1 (514 aa).

The 76-residue stretch at 69-144 folds into the HTH CENPB-type domain; sequence DIKKIRAPKF…RRRHYIQQSA (76 aa).

The protein localises to the nucleus. It localises to the chromosome. It is found in the centromere. In terms of biological role, binds to centromeric K-type repeat DNA and ARS3002 DNA. The CBH-binding consensus sequence is Py-Pu-A-T-A-T-Py-Pu-T-A. The chain is CENP-B homolog protein 1 (cbh1) from Schizosaccharomyces pombe (strain 972 / ATCC 24843) (Fission yeast).